A 400-amino-acid polypeptide reads, in one-letter code: Subtilisin-like protease 7 (400 aa).

An N-terminal signal peptide occupies residues 1-20 (MGFITKAIPLALAAASVING). Positions 21-119 (AEIMETRAGV…IERDARVQIN (99 aa)) are excised as a propeptide. The region spanning 36-118 (KYIVVMNDGM…YIERDARVQI (83 aa)) is the Inhibitor I9 domain. N-linked (GlcNAc...) asparagine glycosylation is present at Asn-58. In terms of domain architecture, Peptidase S8 spans 129–400 (SWGLARVGSK…SKLINNGSGM (272 aa)). Residues Asp-161 and His-192 each act as charge relay system in the active site. N-linked (GlcNAc...) asparagine glycans are attached at residues Asn-222 and Asn-252. Ser-346 serves as the catalytic Charge relay system. A glycan (N-linked (GlcNAc...) asparagine) is linked at Asn-396.

It belongs to the peptidase S8 family.

Its subcellular location is the secreted. Functionally, secreted subtilisin-like serine protease with keratinolytic activity that contributes to pathogenicity. In Trichophyton verrucosum (Cattle ringworm fungus), this protein is Subtilisin-like protease 7 (SUB7).